A 102-amino-acid polypeptide reads, in one-letter code: Integration host factor subunit alpha (102 aa).

Positions 49–71 (FGNFQLRTKPQRPGRNPKTGEEI) are disordered.

This sequence belongs to the bacterial histone-like protein family. Heterodimer of an alpha and a beta chain.

Its function is as follows. This protein is one of the two subunits of integration host factor, a specific DNA-binding protein that functions in genetic recombination as well as in transcriptional and translational control. The sequence is that of Integration host factor subunit alpha from Nitrosomonas eutropha (strain DSM 101675 / C91 / Nm57).